Consider the following 481-residue polypeptide: Ribulose bisphosphate carboxylase large chain (481 aa).

The propeptide occupies 1–2 (MS). P3 is subject to N-acetylproline. At K14 the chain carries N6,N6,N6-trimethyllysine. Substrate is bound by residues N123 and T173. K175 serves as the catalytic Proton acceptor. K177 serves as a coordination point for substrate. Mg(2+) is bound by residues K201, D203, and E204. K201 bears the N6-carboxylysine mark. H294 serves as the catalytic Proton acceptor. Residues R295, H327, and S379 each coordinate substrate.

The protein belongs to the RuBisCO large chain family. Type I subfamily. Heterohexadecamer of 8 large chains and 8 small chains; disulfide-linked. The disulfide link is formed within the large subunit homodimers. It depends on Mg(2+) as a cofactor. Post-translationally, the disulfide bond which can form in the large chain dimeric partners within the hexadecamer appears to be associated with oxidative stress and protein turnover.

The protein resides in the plastid. The enzyme catalyses 2 (2R)-3-phosphoglycerate + 2 H(+) = D-ribulose 1,5-bisphosphate + CO2 + H2O. It catalyses the reaction D-ribulose 1,5-bisphosphate + O2 = 2-phosphoglycolate + (2R)-3-phosphoglycerate + 2 H(+). Its function is as follows. RuBisCO catalyzes two reactions: the carboxylation of D-ribulose 1,5-bisphosphate, the primary event in carbon dioxide fixation, as well as the oxidative fragmentation of the pentose substrate in the photorespiration process. Both reactions occur simultaneously and in competition at the same active site. This is Ribulose bisphosphate carboxylase large chain from Cuscuta gronovii (Common dodder).